The primary structure comprises 372 residues: Chemerin-like receptor 1 (372 aa).

Topologically, residues 1-39 (MEYEGYNDSSIYGEEYSDGSDYIVDLEEAGPLEAKVAEV) are extracellular. Asn7 carries an N-linked (GlcNAc...) asparagine glycan. Residues 40 to 62 (FLVVIYSLVCFLGILGNGLVIVI) traverse the membrane as a helical segment. The Cytoplasmic portion of the chain corresponds to 63 to 73 (ATFKMKKTVNT). Residues 74–95 (VWFVNLAVADFLFNIFLPIHIT) traverse the membrane as a helical segment. Topologically, residues 96–112 (YAAMDYHWVFGKAMCKI) are extracellular. Cys110 and Cys188 form a disulfide bridge. The chain crosses the membrane as a helical span at residues 113 to 133 (SSFLLSHNMYTSVFLLTVISF). Residues 134–152 (DRCISVLLPVWSQNHRSVR) lie on the Cytoplasmic side of the membrane. The chain crosses the membrane as a helical span at residues 153 to 174 (LAYMTCVVVWVLAFFLSSPSLV). The Extracellular portion of the chain corresponds to 175–223 (FRDTVSTSHGKITCFNNFSLAAPEPFSHSTHPRTDPVGYSRHVAVTVTR). A glycan (N-linked (GlcNAc...) asparagine) is linked at Asn191. Residues 224 to 244 (FLCGFLIPVFIITACYLTIVF) form a helical membrane-spanning segment. Over 245–260 (KLQRNRLAKTKKPFKI) the chain is Cytoplasmic. A helical transmembrane segment spans residues 261-281 (IITIIITFFLCWCPYHTLYLL). Topologically, residues 282–299 (ELHHTAVPASVFSLGLPL) are extracellular. The chain crosses the membrane as a helical span at residues 300 to 319 (ATAVAIANSCMNPILYVFMG). Residues 320–372 (HDFKKFKVALFSRLVNALSEDTGPSSYPSHRSFTKMSSLIEKASVNEKETSTL) are Cytoplasmic-facing. Ser338 is subject to Phosphoserine. Thr341 carries the phosphothreonine modification. A phosphoserine mark is found at Ser348, Ser351, and Ser357. Thr371 bears the Phosphothreonine mark.

The protein belongs to the chemokine-like receptor (CMKLR) family. In terms of tissue distribution, high expression in heart and lung, low in small intestines, colon, kidney, liver, uterus and brain.

The protein resides in the cell membrane. Receptor for the chemoattractant adipokine chemerin/RARRES2 and for the omega-3 fatty acid derived molecule resolvin E1. Interaction with RARRES2 initiates activation of G proteins G(i)/G(o) and beta-arrestin pathways inducing cellular responses via second messenger pathways such as intracellular calcium mobilization, phosphorylation of MAP kinases MAPK1/MAPK3 (ERK1/2), TYRO3, MAPK14/P38MAPK and PI3K leading to multifunctional effects, like, reduction of immune responses, enhancing of adipogenesis and angionesis. Resolvin E1 down-regulates cytokine production in macrophages by reducing the activation of MAPK1/3 (ERK1/2) and NF-kappa-B. Positively regulates adipogenesis and adipocyte metabolism. This Rattus norvegicus (Rat) protein is Chemerin-like receptor 1 (Cmklr1).